The following is a 123-amino-acid chain: Small ribosomal subunit protein uS12 (123 aa).

The tract at residues Met-1–Gly-32 is disordered. Residue Asp-89 is modified to 3-methylthioaspartic acid.

This sequence belongs to the universal ribosomal protein uS12 family. In terms of assembly, part of the 30S ribosomal subunit. Contacts proteins S8 and S17. May interact with IF1 in the 30S initiation complex.

Functionally, with S4 and S5 plays an important role in translational accuracy. Its function is as follows. Interacts with and stabilizes bases of the 16S rRNA that are involved in tRNA selection in the A site and with the mRNA backbone. Located at the interface of the 30S and 50S subunits, it traverses the body of the 30S subunit contacting proteins on the other side and probably holding the rRNA structure together. The combined cluster of proteins S8, S12 and S17 appears to hold together the shoulder and platform of the 30S subunit. The protein is Small ribosomal subunit protein uS12 of Desulfatibacillum aliphaticivorans.